The chain runs to 395 residues: Gastric triacylglycerol lipase (395 aa).

The signal sequence occupies residues M1 to G18. N-linked (GlcNAc...) asparagine glycosylation is found at N33, N68, and N98. The 300-residue stretch at P77 to W376 folds into the AB hydrolase-1 domain. The active-site Nucleophile is S171. Cysteines 245 and 254 form a disulfide. N-linked (GlcNAc...) asparagine glycosylation occurs at N270. Active-site charge relay system residues include D342 and H371.

Belongs to the AB hydrolase superfamily. Lipase family. As to expression, secreted by the serous (von Ebner's) glands at the back of the rat tongue.

The protein resides in the secreted. It carries out the reaction a triacylglycerol + H2O = a diacylglycerol + a fatty acid + H(+). It catalyses the reaction 1,2,3-tri-(9Z-octadecenoyl)-glycerol + H2O = 1,2-di-(9Z-octadecenoyl)-sn-glycerol + (9Z)-octadecenoate + H(+). The enzyme catalyses 1,2,3-trioctanoylglycerol + H2O = 1,2-dioctanoyl-sn-glycerol + octanoate + H(+). In terms of biological role, catalyzes the hydrolysis of triacylglycerols to yield free fatty acids, diacylglycerol, monoacylglycerol, and glycerol. Shows a preferential hydrolysis at the sn-3 position of triacylglycerol. The protein is Gastric triacylglycerol lipase (Lipf) of Rattus norvegicus (Rat).